A 467-amino-acid polypeptide reads, in one-letter code: Mitochondrial distribution and morphology protein 10 (467 aa).

The protein belongs to the MDM10 family. In terms of assembly, component of the ER-mitochondria encounter structure (ERMES) or MDM complex, composed of MMM1, MDM10, MDM12 and MDM34. Associates with the mitochondrial outer membrane sorting assembly machinery SAM(core) complex.

The protein resides in the mitochondrion outer membrane. Functionally, component of the ERMES/MDM complex, which serves as a molecular tether to connect the endoplasmic reticulum and mitochondria. Components of this complex are involved in the control of mitochondrial shape and protein biogenesis and may function in phospholipid exchange. MDM10 is involved in the late assembly steps of the general translocase of the mitochondrial outer membrane (TOM complex). Functions in the TOM40-specific route of the assembly of outer membrane beta-barrel proteins, including the association of TOM40 with the receptor TOM22 and small TOM proteins. Can associate with the SAM(core) complex as well as the MDM12-MMM1 complex, both involved in late steps of the major beta-barrel assembly pathway, that is responsible for biogenesis of all outer membrane beta-barrel proteins. May act as a switch that shuttles between both complexes and channels precursor proteins into the TOM40-specific pathway. Plays a role in mitochondrial morphology and in the inheritance of mitochondria. In Ajellomyces capsulatus (strain G186AR / H82 / ATCC MYA-2454 / RMSCC 2432) (Darling's disease fungus), this protein is Mitochondrial distribution and morphology protein 10.